Consider the following 601-residue polypeptide: Cdc42-interacting protein 4 (601 aa).

Residues 1-117 are required for translocation to the plasma membrane in response to insulin, podosome formation and interaction with AKAP9 and microtubules; the sequence is MDWGTELWDQ…EMKQERKMHF (117 aa). The region spanning 1–264 is the F-BAR domain; that stretch reads MDWGTELWDQ…AANAVDPKND (264 aa). A coiled-coil region spans residues 67–259; the sequence is FSQQQSFVQI…EGMKVAANAV (193 aa). Disordered regions lie at residues 280-358, 390-420, and 478-543; these read GDVE…GRDP, DFSH…EVDQ, and NRGD…SPIG. A compositionally biased stretch (polar residues) spans 289–302; it reads QPMNRAPSDSSLGT. The interaction with CDC42 stretch occupies residues 293 to 537; sequence RAPSDSSLGT…TEFDEDFEEE (245 aa). The tract at residues 293–601 is interaction with PDE6G; it reads RAPSDSSLGT…PTSYLRVTLN (309 aa). A phosphoserine mark is found at Ser296, Ser298, and Ser299. Residues 314 to 329 are compositionally biased toward basic residues; that stretch reads GRSRTKRWPFGKKNKP. Ser335 is modified (phosphoserine). Residues 336 to 346 show a composition bias toward low complexity; that stretch reads PLGGPVPSALP. A Phosphoserine modification is found at Ser351. A coiled-coil region spans residues 388 to 481; sequence TEDFSHLPPE…ESRVLSNRGD (94 aa). Positions 393 to 470 constitute an REM-1 domain; the sequence is HLPPEQQRKR…VQKYEAWLAE (78 aa). Residues 407–420 show a composition bias toward basic and acidic residues; sequence LEERSRELQKEVDQ. The interval 471–601 is required for interaction with FASLG and localization to lysosomes; that stretch reads AESRVLSNRG…PTSYLRVTLN (131 aa). Residue Ser482 is modified to Phosphoserine. Positions 487-541 are interaction with DNM2 and WASL; it reads ARPPDPPTSAPPDSSSNSASQDTKESSEEPPSEESQDTPIYTEFDEDFEEEPTSP. Residues 497 to 506 show a composition bias toward low complexity; it reads PPDSSSNSAS. Residues 529 to 538 are compositionally biased toward acidic residues; sequence EFDEDFEEEP. Positions 529–601 are interaction with DNM1 and WASL; sequence EFDEDFEEEP…PTSYLRVTLN (73 aa). Residues 538–601 are required for podosome formation; it reads PTSPIGHCVA…PTSYLRVTLN (64 aa). Positions 540–601 constitute an SH3 domain; sequence SPIGHCVAIY…PTSYLRVTLN (62 aa). Positions 544 to 601 are interaction with WAS; the sequence is HCVAIYHFEGSSEGTISMAEGEDLSLMEEDKGDGWTRVRRKEGGEGYVPTSYLRVTLN. The interval 546–601 is interaction with ARHGAP17, DAAM1, DIAPH1 and DIAPH2; that stretch reads VAIYHFEGSSEGTISMAEGEDLSLMEEDKGDGWTRVRRKEGGEGYVPTSYLRVTLN.

Belongs to the FNBP1 family. In terms of assembly, homodimerizes, the dimers can polymerize end-to-end to form filamentous structures. Interacts with AKAP9, ARHGAP17, DAAM1, DIAPH1, DIAPH2, DNM1, FASLG/FASL, GAPVD1, LYN, microtubules, PDE6G, SRC and WAS/WASP. Interacts with the ligand binding domain of the thyroid receptor (TR) in the presence of thyroid hormone. May interact with CTNNB1 and HD/HTT. Interacts specifically with GTP-bound CDC42 and RHOQ. Interacts with DNM2 and WASL. Post-translationally, tyrosine phosphorylated. Also phosphorylated by PKA.

The protein resides in the cytoplasm. The protein localises to the cytoskeleton. It is found in the cell cortex. It localises to the lysosome. Its subcellular location is the golgi apparatus. The protein resides in the cell membrane. The protein localises to the cell projection. It is found in the phagocytic cup. In terms of biological role, required to coordinate membrane tubulation with reorganization of the actin cytoskeleton during endocytosis. Also acts as a link between CDC42 signaling and regulation of the actin cytoskeleton. Binds to lipids such as phosphatidylinositol 4,5-bisphosphate and phosphatidylserine and promotes membrane invagination and the formation of tubules. Also enhances actin polymerization in the vicinity of membrane tubules by recruiting WASL/N-WASP which in turn activates the Arp2/3 complex. Actin polymerization and dynamin may promote the fission of membrane tubules to form endocytic vesicles. Required for the formation of podosomes, actin-rich adhesion structures specific to monocyte-derived cells. Required for translocation of GLUT4 to the plasma membrane in response to insulin signaling. May be required for the lysosomal retention of FASLG/FASL. In Pongo abelii (Sumatran orangutan), this protein is Cdc42-interacting protein 4 (TRIP10).